We begin with the raw amino-acid sequence, 412 residues long: Stachydrine N-demethylase (412 aa).

Residues 45-150 form the Rieske domain; that stretch reads LYAVPVCQLA…LRNLDGLIYI (106 aa). 4 residues coordinate [2Fe-2S] cluster: Cys86, His88, Cys106, and His109. Fe cation-binding residues include His204, His209, and Asp360.

It belongs to the bacterial ring-hydroxylating dioxygenase alpha subunit family. As to quaternary structure, homotrimer. The system is probably composed of an oxygenase subunit (Stc2) and two reductase subunits (Stc3 and Stc4). [2Fe-2S] cluster serves as cofactor. Requires Fe cation as cofactor.

It carries out the reaction L-proline betaine + NADH + O2 + H(+) = N-methyl-L-proline + formaldehyde + NAD(+) + H2O. It catalyses the reaction L-proline betaine + NADPH + O2 + H(+) = N-methyl-L-proline + formaldehyde + NADP(+) + H2O. Functionally, monooxygenase involved in the catabolism of stachydrine (L-proline betaine), a source of carbon and nitrogen. Part of a Rieske-type oxygenase system that catalyzes the demethylation of stachydrine to produce N-methyl-L-proline (monomethylproline). Stc2 is the catalytic subunit. The protein is Stachydrine N-demethylase of Rhizobium meliloti (strain 1021) (Ensifer meliloti).